The sequence spans 630 residues: tRNA uridine 5-carboxymethylaminomethyl modification enzyme MnmG (630 aa).

13–18 (GGGHAG) contacts FAD. 273 to 287 (GPRYCPSIEDKVMRF) is a binding site for NAD(+).

It belongs to the MnmG family. As to quaternary structure, homodimer. Heterotetramer of two MnmE and two MnmG subunits. FAD is required as a cofactor.

The protein localises to the cytoplasm. Functionally, NAD-binding protein involved in the addition of a carboxymethylaminomethyl (cmnm) group at the wobble position (U34) of certain tRNAs, forming tRNA-cmnm(5)s(2)U34. The protein is tRNA uridine 5-carboxymethylaminomethyl modification enzyme MnmG of Actinobacillus pleuropneumoniae serotype 3 (strain JL03).